A 587-amino-acid polypeptide reads, in one-letter code: Folylpolyglutamate synthase, mitochondrial (587 aa).

Residues 1–42 constitute a mitochondrion transit peptide; sequence MSRARSHLRAALFLAAASARGITTQVAARRGLSAWPVPQEPS. Methionine 43 is modified (N-acetylmethionine). 106-109 lines the ATP pocket; that stretch reads GKGS. Serine 130, glutamate 200, and histidine 228 together coordinate Mg(2+). The ATP site is built by arginine 363 and aspartate 377. Serine 539 is subject to Phosphoserine.

It belongs to the folylpolyglutamate synthase family. In terms of assembly, monomer. The cofactor is K(+). Requires NH4(+) as cofactor.

It localises to the mitochondrion inner membrane. Its subcellular location is the mitochondrion matrix. It is found in the cytoplasm. The enzyme catalyses (6S)-5,6,7,8-tetrahydrofolyl-(gamma-L-Glu)(n) + L-glutamate + ATP = (6S)-5,6,7,8-tetrahydrofolyl-(gamma-L-Glu)(n+1) + ADP + phosphate + H(+). It participates in cofactor biosynthesis; tetrahydrofolylpolyglutamate biosynthesis. Activated by 10 mM sodium bicarbonate. Catalyzes conversion of folates to polyglutamate derivatives allowing concentration of folate compounds in the cell and the intracellular retention of these cofactors, which are important substrates for most of the folate-dependent enzymes that are involved in one-carbon transfer reactions involved in purine, pyrimidine and amino acid synthesis. Unsubstituted reduced folates are the preferred substrates. Metabolizes methotrexate (MTX) to polyglutamates. The chain is Folylpolyglutamate synthase, mitochondrial (FPGS) from Homo sapiens (Human).